A 318-amino-acid chain; its full sequence is Deoxymugineic acid synthase 1 (318 aa).

Asp48 serves as a coordination point for NADP(+). Tyr53 (proton donor) is an active-site residue. His116 serves as a coordination point for substrate. NADP(+)-binding positions include 162-163 (CN), Gln184, 262-270 (FDEARMREN), and 277-285 (ELTEEERQR).

This sequence belongs to the aldo/keto reductase family. Confined to cells participating in long distance transport (e.g. in the parts of pericycle cells adjacent to the protoxylem and metaxylem) in roots and to vascular bundles in shoots.

It carries out the reaction 2'-deoxymugineate + NAD(+) = 3''-deamino-3''-oxonicotianamine + NADH + H(+). The enzyme catalyses 2'-deoxymugineate + NADP(+) = 3''-deamino-3''-oxonicotianamine + NADPH + H(+). It participates in siderophore biosynthesis. Catalyzes the reduction of a 3''-keto intermediate during the biosynthesis of 2'-deoxymugineic acid (DMA) from L-Met. Involved in the formation of phytosiderophores (MAs) belonging to the mugineic acid family and required to acquire iron. This chain is Deoxymugineic acid synthase 1, found in Oryza sativa subsp. japonica (Rice).